Consider the following 528-residue polypeptide: MSYGTINDMNESVTNYRIKKAQNNIKGWYAYSFSSEPFVVSAVSTYIPLLLQQFASINGVKVHDHSIPCLSETGSDSDKCVLGLFNNRIFVDTSSFALYVFSLSVLFQTIIVISVSGIVDLWGSVKFKGRILVWFGIVGALSTVAISKLNDTQIYSLAGLYIVANGCFGVINVVGNSLLPIFVKDSLKCQSQGAYEPDKVDSLTTVISGRGASLGYSSALIVQIVSMFLVASKKGSKQDVQVAVLFVGIWWFVWQLPMIWLIDDVTIPIRADDSTLASARSPYPGEQDALGQLNWKNYLSYGWVSLFESFKHARLLKDVMIFLIAWFIISDSITTINSTAVLFSKAELHMSTLNLIMISVLTVVNAMLGAFMIPQFLATKFRWTSSQTLMYIIIWASFIPFYGILGFFFNAFGLKHKFEMFLLAIWYGLSLGGLSAVSRSVFSLIVPPGKESTFFSMFSITDKGSSILGPFLVGLLTDKTHNIRYSFYFFFLLLMLSLPVLNCLDVKRGRREAEELSQVLPESERRLD.

Over 1–98 (MSYGTINDMN…IFVDTSSFAL (98 aa)) the chain is Cytoplasmic. The helical transmembrane segment at 99–119 (YVFSLSVLFQTIIVISVSGIV) threads the bilayer. At 120–130 (DLWGSVKFKGR) the chain is on the vacuolar side. A helical transmembrane segment spans residues 131–151 (ILVWFGIVGALSTVAISKLND). Residues 152–153 (TQ) lie on the Cytoplasmic side of the membrane. The helical transmembrane segment at 154–174 (IYSLAGLYIVANGCFGVINVV) threads the bilayer. The Vacuolar segment spans residues 175 to 210 (GNSLLPIFVKDSLKCQSQGAYEPDKVDSLTTVISGR). The chain crosses the membrane as a helical span at residues 211–231 (GASLGYSSALIVQIVSMFLVA). Over 232-241 (SKKGSKQDVQ) the chain is Cytoplasmic. A helical membrane pass occupies residues 242-262 (VAVLFVGIWWFVWQLPMIWLI). Over 263 to 318 (DDVTIPIRADDSTLASARSPYPGEQDALGQLNWKNYLSYGWVSLFESFKHARLLKD) the chain is Vacuolar. Position 278 is a phosphoserine (Ser278). Residues 319–339 (VMIFLIAWFIISDSITTINST) traverse the membrane as a helical segment. Residues 340-352 (AVLFSKAELHMST) are Cytoplasmic-facing. The helical transmembrane segment at 353-373 (LNLIMISVLTVVNAMLGAFMI) threads the bilayer. Topologically, residues 374 to 388 (PQFLATKFRWTSSQT) are vacuolar. The helical transmembrane segment at 389–409 (LMYIIIWASFIPFYGILGFFF) threads the bilayer. Over 410–417 (NAFGLKHK) the chain is Cytoplasmic. The chain crosses the membrane as a helical span at residues 418 to 438 (FEMFLLAIWYGLSLGGLSAVS). The Vacuolar portion of the chain corresponds to 439–485 (RSVFSLIVPPGKESTFFSMFSITDKGSSILGPFLVGLLTDKTHNIRY). A helical transmembrane segment spans residues 486 to 506 (SFYFFFLLLMLSLPVLNCLDV). Topologically, residues 507 to 528 (KRGRREAEELSQVLPESERRLD) are cytoplasmic.

The protein belongs to the ATG22 family.

It localises to the vacuole membrane. Functionally, vacuolar effluxer which mediate the efflux of amino acids resulting from autophagic degradation. The release of autophagic amino acids allows the maintenance of protein synthesis and viability during nitrogen starvation. The sequence is that of Autophagy-related protein 22 (ATG22) from Saccharomyces cerevisiae (strain YJM789) (Baker's yeast).